Consider the following 426-residue polypeptide: Histone deacetylase 9 (426 aa).

Residues 6-318 (KISYFYDGDV…WTVETGILLD (313 aa)) form a histone deacetylase region. The Proton donor/acceptor role is filled by H137. D172, H174, and D261 together coordinate Zn(2+). Residues 383–426 (PDFYIPDFDEDEQNPDVRADQRSRDKQIQRDDEYFDGDNDNDAS) form a disordered region. Over residues 397–414 (PDVRADQRSRDKQIQRDD) the composition is skewed to basic and acidic residues. Residues 415 to 426 (EYFDGDNDNDAS) are compositionally biased toward acidic residues.

It belongs to the histone deacetylase family. HD type 1 subfamily. As to quaternary structure, interacts with AHL22. Binds to farnesylated ASG2 in the cytosol. Requires Zn(2+) as cofactor.

It is found in the nucleus. It localises to the cytoplasm. Its subcellular location is the cytosol. It catalyses the reaction N(6)-acetyl-L-lysyl-[histone] + H2O = L-lysyl-[histone] + acetate. Its function is as follows. Responsible for the deacetylation of lysine residues on the N-terminal part of the core histones (H2A, H2B, H3 and H4). Histone deacetylation gives a tag for epigenetic repression and plays an important role in transcriptional regulation, cell cycle progression and developmental events. Histone deacetylases act via the formation of large multiprotein complexes. The polypeptide is Histone deacetylase 9 (HDA9) (Arabidopsis thaliana (Mouse-ear cress)).